Reading from the N-terminus, the 726-residue chain is Fatty acid oxidation complex subunit alpha (726 aa).

Positions 1–189 are enoyl-CoA hydratase/isomerase; that stretch reads MIYQGENLSV…KIGMVDGIVS (189 aa). D296 contacts substrate. The 3-hydroxyacyl-CoA dehydrogenase stretch occupies residues 311–726; the sequence is EPVKNAAVLG…PKSSVSSPSV (416 aa). Residues M324, D343, 400 to 402, K407, and S429 each bind NAD(+); that span reads VVE. H450 functions as the For 3-hydroxyacyl-CoA dehydrogenase activity in the catalytic mechanism. N453 serves as a coordination point for NAD(+). Substrate is bound by residues N500 and Y660.

This sequence in the N-terminal section; belongs to the enoyl-CoA hydratase/isomerase family. It in the C-terminal section; belongs to the 3-hydroxyacyl-CoA dehydrogenase family. Heterotetramer of two alpha chains (FadB) and two beta chains (FadA).

The catalysed reaction is a (3S)-3-hydroxyacyl-CoA + NAD(+) = a 3-oxoacyl-CoA + NADH + H(+). The enzyme catalyses a (3S)-3-hydroxyacyl-CoA = a (2E)-enoyl-CoA + H2O. It catalyses the reaction a 4-saturated-(3S)-3-hydroxyacyl-CoA = a (3E)-enoyl-CoA + H2O. It carries out the reaction (3S)-3-hydroxybutanoyl-CoA = (3R)-3-hydroxybutanoyl-CoA. The catalysed reaction is a (3Z)-enoyl-CoA = a 4-saturated (2E)-enoyl-CoA. The enzyme catalyses a (3E)-enoyl-CoA = a 4-saturated (2E)-enoyl-CoA. The protein operates within lipid metabolism; fatty acid beta-oxidation. Its function is as follows. Involved in the aerobic and anaerobic degradation of long-chain fatty acids via beta-oxidation cycle. Catalyzes the formation of 3-oxoacyl-CoA from enoyl-CoA via L-3-hydroxyacyl-CoA. It can also use D-3-hydroxyacyl-CoA and cis-3-enoyl-CoA as substrate. This chain is Fatty acid oxidation complex subunit alpha, found in Aliivibrio salmonicida (strain LFI1238) (Vibrio salmonicida (strain LFI1238)).